We begin with the raw amino-acid sequence, 293 residues long: Protein PET54 (293 aa).

The protein localises to the mitochondrion inner membrane. In terms of biological role, activator of specific mitochondrial mRNAs. PET54 is involved in the excision of intron aI5-beta from pre-mRNA for cytochrome c oxidase I (COX1) and plays a role in promoting the translation of COX3. In Saccharomyces cerevisiae (strain ATCC 204508 / S288c) (Baker's yeast), this protein is Protein PET54 (PET54).